Here is a 177-residue protein sequence, read N- to C-terminus: Large ribosomal subunit protein uL6 (177 aa).

The protein belongs to the universal ribosomal protein uL6 family. Part of the 50S ribosomal subunit.

In terms of biological role, this protein binds to the 23S rRNA, and is important in its secondary structure. It is located near the subunit interface in the base of the L7/L12 stalk, and near the tRNA binding site of the peptidyltransferase center. The sequence is that of Large ribosomal subunit protein uL6 from Herminiimonas arsenicoxydans.